The chain runs to 568 residues: Transport inhibitor response 1-like protein Os11g0515500 (568 aa).

The 45-residue stretch at 1-45 (MVFFPEEVVEHILGFLASHRDRNAVSLVCREWYRVERLSRRSVLV) folds into the F-box domain. 1D-myo-inositol hexakisphosphate is bound by residues Lys-69, 103-104 (KR), and Arg-335. Residues 338-343 (PANANA) are interaction with auxin-responsive proteins. A 1D-myo-inositol hexakisphosphate-binding site is contributed by 390 to 392 (SFR). The interval 394–398 (CVLDP) is interaction with auxin-responsive proteins. Arg-425 contributes to the 1D-myo-inositol hexakisphosphate binding site. Residues 453 to 454 (AF) form an interaction with auxin-responsive proteins region. 1D-myo-inositol hexakisphosphate contacts are provided by residues 473–474 (KK) and Arg-498.

In terms of assembly, part of a SCF (SKP1-cullin-F-box) protein ligase complex. May interact with auxin and auxin-responsive proteins.

The protein resides in the nucleus. It participates in protein modification; protein ubiquitination. The sequence is that of Transport inhibitor response 1-like protein Os11g0515500 from Oryza sativa subsp. japonica (Rice).